We begin with the raw amino-acid sequence, 44 residues long: Photosystem I reaction center subunit IX (44 aa).

Residues 7–27 (YLSVAPVLSTLWFGSLAGLLI) form a helical membrane-spanning segment.

The protein belongs to the PsaJ family.

It localises to the plastid. The protein localises to the chloroplast thylakoid membrane. In terms of biological role, may help in the organization of the PsaE and PsaF subunits. This is Photosystem I reaction center subunit IX from Fagopyrum esculentum subsp. ancestrale (Wild buckwheat).